Here is a 646-residue protein sequence, read N- to C-terminus: NADP-dependent malic enzyme 4, chloroplastic (646 aa).

A chloroplast-targeting transit peptide spans 1–74 (MISLTPSLFL…LETSAADIVP (74 aa)). Catalysis depends on Tyr-194, which acts as the Proton donor. Residue Arg-247 coordinates NADP(+). The active-site Proton acceptor is Lys-265. The a divalent metal cation site is built by Glu-337, Asp-338, and Asp-361. NADP(+) contacts are provided by residues Asp-361, 390-406 (LFLGAGEAGTGIAELIA), and Asn-502.

The protein belongs to the malic enzymes family. As to quaternary structure, homodimer and homotetramer. Mg(2+) serves as cofactor. Requires Mn(2+) as cofactor. Expressed in leaves, stems, flowers and roots, mainly in vascular system. In roots, present in the stele, including the vascular tissue and the pericycle, mainly at emerging lateral roots and at root tips.

It localises to the plastid. The protein resides in the chloroplast. It catalyses the reaction (S)-malate + NADP(+) = pyruvate + CO2 + NADPH. It carries out the reaction oxaloacetate + H(+) = pyruvate + CO2. It functions in the pathway photosynthesis; C3 acid pathway. The chloroplastic ME isoform decarboxylates malate shuttled from neighboring mesophyll cells. The CO(2) released is then refixed by ribulose-bisphosphate carboxylase. This pathway eliminates the photorespiratory loss of CO(2) that occurs in most plants. In Arabidopsis thaliana (Mouse-ear cress), this protein is NADP-dependent malic enzyme 4, chloroplastic (NADP-ME4).